Here is a 570-residue protein sequence, read N- to C-terminus: Peptidyl-prolyl cis-trans isomerase-like 2 (570 aa).

Residues 37-110 enclose the U-box domain; sequence KRLPFNFCSL…GDYVDPVTYK (74 aa). Disordered stretches follow at residues 215-253, 428-449, and 469-570; these read RSERAQRADSSAVTKKADGSTTTSTQSKTASFQSGKPTP, STTLNNLETHPVNSSTNRPTPD, and KKAE…SSWD. A compositionally biased stretch (low complexity) spans 234–248; that stretch reads STTTSTQSKTASFQS. In terms of domain architecture, PPIase cyclophilin-type spans 298–457; the sequence is QKGYARISTT…PDIRITDVTI (160 aa). A compositionally biased stretch (polar residues) spans 428–446; the sequence is STTLNNLETHPVNSSTNRP. The segment covering 469–483 has biased composition (basic and acidic residues); the sequence is KKAEEASGKNKKVDP. 2 stretches are compositionally biased toward acidic residues: residues 484–497 and 535–550; these read TEEDRETQQEDDDQ and QEEDEIVEFVDEEPEP.

Belongs to the cyclophilin-type PPIase family. PPIL2 subfamily.

The protein localises to the nucleus. The catalysed reaction is [protein]-peptidylproline (omega=180) = [protein]-peptidylproline (omega=0). The enzyme catalyses S-ubiquitinyl-[E2 ubiquitin-conjugating enzyme]-L-cysteine + [acceptor protein]-L-lysine = [E2 ubiquitin-conjugating enzyme]-L-cysteine + N(6)-ubiquitinyl-[acceptor protein]-L-lysine.. May catalyze the cis-trans isomerization of proline imidic peptide bonds in oligopeptides thereby assisting the folding of proteins. May also function as a chaperone, playing a role in intracellular transport of proteins. May also have a protein ubiquitin ligase activity acting as an E3 ubiquitin protein ligase or as a ubiquitin-ubiquitin ligase promoting elongation of ubiquitin chains on proteins. In Aspergillus oryzae (strain ATCC 42149 / RIB 40) (Yellow koji mold), this protein is Peptidyl-prolyl cis-trans isomerase-like 2 (cyp8).